A 450-amino-acid chain; its full sequence is UDP-N-acetylmuramoylalanine--D-glutamate ligase (450 aa).

119–125 (GSNGKTT) is an ATP binding site.

Belongs to the MurCDEF family.

It is found in the cytoplasm. It catalyses the reaction UDP-N-acetyl-alpha-D-muramoyl-L-alanine + D-glutamate + ATP = UDP-N-acetyl-alpha-D-muramoyl-L-alanyl-D-glutamate + ADP + phosphate + H(+). Its pathway is cell wall biogenesis; peptidoglycan biosynthesis. Cell wall formation. Catalyzes the addition of glutamate to the nucleotide precursor UDP-N-acetylmuramoyl-L-alanine (UMA). The sequence is that of UDP-N-acetylmuramoylalanine--D-glutamate ligase from Bacillus thuringiensis (strain Al Hakam).